The sequence spans 153 residues: Acetylacetone-cleaving enzyme (153 aa).

As to quaternary structure, homotetramer. The cofactor is Fe cation.

The catalysed reaction is acetylacetone + O2 = methylglyoxal + acetate + H(+). Its pathway is xenobiotic degradation; acetylacetone degradation. Cleaves acetylacetone to equimolar amounts of methylglyoxal and acetate, consuming one equivalent of molecular oxygen. This Acinetobacter johnsonii protein is Acetylacetone-cleaving enzyme (dke1).